Here is a 420-residue protein sequence, read N- to C-terminus: UDP-glucuronic acid decarboxylase 1 (420 aa).

Residue methionine 1 is modified to N-acetylmethionine. At 1 to 19 the chain is on the cytoplasmic side; the sequence is MVSKGLLRLVSSVNRRRMK. Residues 20–40 form a helical; Signal-anchor for type II membrane protein membrane-spanning segment; the sequence is LLLGIALFAYAASVWGNFVNM. Residues 41 to 420 lie on the Lumenal side of the membrane; the sequence is RSIQENGELK…RVKKGRTRHS (380 aa). Threonine 94 carries the phosphothreonine modification. NAD(+)-binding residues include glycine 98, phenylalanine 99, valine 100, aspartate 119, asparagine 120, phenylalanine 122, threonine 123, glycine 124, aspartate 144, and valine 145. Positions 149 and 150 each coordinate UDP-alpha-D-glucuronate. Leucine 159 and serine 161 together coordinate NAD(+). UDP-alpha-D-glucuronate is bound at residue lysine 177. Residue threonine 178 participates in NAD(+) binding. Asparagine 185, glycine 188, lysine 191, and arginine 192 together coordinate UDP-alpha-D-glucuronate. Residues alanine 200, tyrosine 231, and lysine 235 each coordinate NAD(+). The active-site Proton acceptor is tyrosine 231. UDP-alpha-D-glucuronate is bound by residues tyrosine 245, glutamine 248, and glutamate 249. 3 residues coordinate NAD(+): threonine 261, histidine 267, and arginine 272. An N-linked (GlcNAc...) asparagine glycan is attached at asparagine 316.

It belongs to the NAD(P)-dependent epimerase/dehydratase family. UDP-glucuronic acid decarboxylase subfamily. In terms of assembly, homodimer and homotetramer. Interacts with AKT1. NAD(+) is required as a cofactor.

The protein resides in the golgi apparatus. The protein localises to the golgi stack membrane. It carries out the reaction UDP-alpha-D-glucuronate + H(+) = UDP-alpha-D-xylose + CO2. The protein operates within nucleotide-sugar biosynthesis; UDP-alpha-D-xylose biosynthesis; UDP-alpha-D-xylose from UDP-alpha-D-glucuronate: step 1/1. Catalyzes the NAD-dependent decarboxylation of UDP-glucuronic acid to UDP-xylose. Necessary for the biosynthesis of the core tetrasaccharide in glycosaminoglycan biosynthesis. The sequence is that of UDP-glucuronic acid decarboxylase 1 (Uxs1) from Mus musculus (Mouse).